We begin with the raw amino-acid sequence, 116 residues long: G antigen 2B/2C (116 aa).

The tract at residues 1 to 116 is disordered; the sequence is MSWRGRSTYR…PEEGEKQSQC (116 aa). Acidic residues-rich tracts occupy residues 31-44 and 86-95; these read FSDE…EEGE and ECEDGPDGQE. Basic and acidic residues predominate over residues 102 to 116; that stretch reads EEVKTPEEGEKQSQC.

Belongs to the GAGE family. Expressed in a variety of tumor tissues but not in normal tissues, except testis.

Functionally, antigen, recognized on melanoma by autologous cytolytic T-lymphocytes. In Homo sapiens (Human), this protein is G antigen 2B/2C (GAGE2B).